The following is a 443-amino-acid chain: Ribulose bisphosphate carboxylase large chain (443 aa).

At K3 the chain carries N6,N6,N6-trimethyllysine. 2 residues coordinate substrate: N112 and T162. Catalysis depends on K164, which acts as the Proton acceptor. K166 serves as a coordination point for substrate. The Mg(2+) site is built by K190, D192, and E193. K190 is subject to N6-carboxylysine. Residue H283 is the Proton acceptor of the active site. Substrate contacts are provided by R284, H316, and S368.

It belongs to the RuBisCO large chain family. Type I subfamily. In terms of assembly, heterohexadecamer of 8 large chains and 8 small chains; disulfide-linked. The disulfide link is formed within the large subunit homodimers. Mg(2+) serves as cofactor. Post-translationally, the disulfide bond which can form in the large chain dimeric partners within the hexadecamer appears to be associated with oxidative stress and protein turnover.

Its subcellular location is the plastid. The protein resides in the chloroplast. The catalysed reaction is 2 (2R)-3-phosphoglycerate + 2 H(+) = D-ribulose 1,5-bisphosphate + CO2 + H2O. It catalyses the reaction D-ribulose 1,5-bisphosphate + O2 = 2-phosphoglycolate + (2R)-3-phosphoglycerate + 2 H(+). Its function is as follows. RuBisCO catalyzes two reactions: the carboxylation of D-ribulose 1,5-bisphosphate, the primary event in carbon dioxide fixation, as well as the oxidative fragmentation of the pentose substrate in the photorespiration process. Both reactions occur simultaneously and in competition at the same active site. This chain is Ribulose bisphosphate carboxylase large chain, found in Iris germanica (Bearded iris).